A 314-amino-acid polypeptide reads, in one-letter code: Serine/threonine-protein phosphatase CPPED1 (314 aa).

Serine 2 bears the Phosphoserine mark. Positions 47-250 are catalytic; the sequence is KAWSTGDCDN…KVVFSGHYHR (204 aa). The a divalent metal cation site is built by aspartate 53, aspartate 90, asparagine 127, and histidine 247. Serine 294 is modified (phosphoserine).

It belongs to the metallophosphoesterase superfamily. CPPED1 family. A divalent metal cation is required as a cofactor.

The protein resides in the cytoplasm. It carries out the reaction O-phospho-L-seryl-[protein] + H2O = L-seryl-[protein] + phosphate. The catalysed reaction is O-phospho-L-threonyl-[protein] + H2O = L-threonyl-[protein] + phosphate. Functionally, protein phosphatase that dephosphorylates AKT family kinase specifically at 'Ser-473', blocking cell cycle progression and promoting cell apoptosis. May play an inhibitory role in glucose uptake by adipocytes. In Pongo abelii (Sumatran orangutan), this protein is Serine/threonine-protein phosphatase CPPED1 (CPPED1).